Here is a 448-residue protein sequence, read N- to C-terminus: Adenylosuccinate synthetase (448 aa).

Residues 22–28 and 50–52 each bind GTP; these read GDEGKGK and GHT. The Proton acceptor role is filled by D23. Mg(2+) contacts are provided by D23 and G50. Residues 23–26, 48–51, T139, R153, Q234, T249, and R321 contribute to the IMP site; these read DEGK and NAGH. Catalysis depends on H51, which acts as the Proton donor. Position 317 to 323 (317 to 323) interacts with substrate; that stretch reads SVTGRPR. GTP contacts are provided by residues R323, 349-351, and 431-433; these read KLD and STG.

Belongs to the adenylosuccinate synthetase family. As to quaternary structure, homodimer. The cofactor is Mg(2+).

It localises to the cytoplasm. It carries out the reaction IMP + L-aspartate + GTP = N(6)-(1,2-dicarboxyethyl)-AMP + GDP + phosphate + 2 H(+). Its pathway is purine metabolism; AMP biosynthesis via de novo pathway; AMP from IMP: step 1/2. Functionally, plays an important role in the de novo pathway of purine nucleotide biosynthesis. Catalyzes the first committed step in the biosynthesis of AMP from IMP. The protein is Adenylosuccinate synthetase of Burkholderia pseudomallei (strain 1106a).